The following is a 301-amino-acid chain: (R)-2-haloacid dehalogenase (301 aa).

The protein belongs to the HAD-like hydrolase superfamily. S-2-haloalkanoic acid dehalogenase family. Homotetramer.

It catalyses the reaction an (R)-2-haloacid + H2O = a (2S)-2-hydroxycarboxylate + a halide anion + H(+). Catalyzes the hydrolytic dehalogenation of small (R)-2-haloalkanoic acids to yield the corresponding (S)-2-hydroxyalkanoic acids. Acts on acids of short chain lengths, C(2) to C(4), with inversion of configuration at C-2. This chain is (R)-2-haloacid dehalogenase (hadD), found in Pseudomonas putida (Arthrobacter siderocapsulatus).